Here is a 298-residue protein sequence, read N- to C-terminus: Probable endonuclease 4 (298 aa).

9 residues coordinate Zn(2+): His-69, His-111, Glu-146, Asp-180, His-183, His-215, Asp-228, His-230, and Glu-260.

The protein belongs to the AP endonuclease 2 family. Requires Zn(2+) as cofactor.

It carries out the reaction Endonucleolytic cleavage to 5'-phosphooligonucleotide end-products.. In terms of biological role, endonuclease IV plays a role in DNA repair. It cleaves phosphodiester bonds at apurinic or apyrimidinic (AP) sites, generating a 3'-hydroxyl group and a 5'-terminal sugar phosphate. In Bacillus anthracis (strain A0248), this protein is Probable endonuclease 4.